We begin with the raw amino-acid sequence, 366 residues long: Chorismate synthase (366 aa).

NADP(+) contacts are provided by R48 and R54. FMN contacts are provided by residues R125–S127, N238–A239, G278, K293–S297, and R319.

Belongs to the chorismate synthase family. As to quaternary structure, homotetramer. FMNH2 is required as a cofactor.

It carries out the reaction 5-O-(1-carboxyvinyl)-3-phosphoshikimate = chorismate + phosphate. It participates in metabolic intermediate biosynthesis; chorismate biosynthesis; chorismate from D-erythrose 4-phosphate and phosphoenolpyruvate: step 7/7. Its function is as follows. Catalyzes the anti-1,4-elimination of the C-3 phosphate and the C-6 proR hydrogen from 5-enolpyruvylshikimate-3-phosphate (EPSP) to yield chorismate, which is the branch point compound that serves as the starting substrate for the three terminal pathways of aromatic amino acid biosynthesis. This reaction introduces a second double bond into the aromatic ring system. The sequence is that of Chorismate synthase from Neisseria gonorrhoeae (strain ATCC 700825 / FA 1090).